A 225-amino-acid polypeptide reads, in one-letter code: Fibronectin type III domain-containing protein 10 (225 aa).

The first 19 residues, 1-19, serve as a signal peptide directing secretion; sequence MRAPPLLLLLAACAPPSGA. Topologically, residues 20 to 181 are extracellular; that stretch reads AVDPTPPGWE…FTAEPAAMQE (162 aa). Residues 72 to 167 form the Fibronectin type-III domain; it reads LASAGGSLRA…ELAAAPPELA (96 aa). N-linked (GlcNAc...) asparagine glycans are attached at residues asparagine 86 and asparagine 109. The helical transmembrane segment at 182–202 threads the bilayer; sequence IVVAMTAVGGSICVMLVVICL. Over 203 to 225 the chain is Cytoplasmic; it reads LVAYITENLMHPTFRRPSLRRQP.

It is found in the membrane. This chain is Fibronectin type III domain-containing protein 10 (Fndc10), found in Rattus norvegicus (Rat).